The primary structure comprises 250 residues: 2,3-bisphosphoglycerate-dependent phosphoglycerate mutase (250 aa).

Residues 8–15 (RHGESQWN), 21–22 (TG), Arg60, 87–90 (ERHY), Lys98, 114–115 (RR), and 183–184 (GN) contribute to the substrate site. Catalysis depends on His9, which acts as the Tele-phosphohistidine intermediate. Residue Glu87 is the Proton donor/acceptor of the active site.

The protein belongs to the phosphoglycerate mutase family. BPG-dependent PGAM subfamily. Homodimer.

The enzyme catalyses (2R)-2-phosphoglycerate = (2R)-3-phosphoglycerate. The protein operates within carbohydrate degradation; glycolysis; pyruvate from D-glyceraldehyde 3-phosphate: step 3/5. Its function is as follows. Catalyzes the interconversion of 2-phosphoglycerate and 3-phosphoglycerate. This Bordetella pertussis (strain Tohama I / ATCC BAA-589 / NCTC 13251) protein is 2,3-bisphosphoglycerate-dependent phosphoglycerate mutase.